The chain runs to 153 residues: Protein SREK1IP1 (153 aa).

Residues 13-30 (AGCRKCGYPGHLTFECRN) form a CCHC-type zinc finger. The tract at residues 44-153 (VSSTSSEDSD…SPNRSEVTKK (110 aa)) is disordered. The residue at position 52 (S52) is a Phosphoserine. The segment covering 66–84 (QEKRINEEEEKKKEKSREK) has biased composition (basic and acidic residues). Residues 85 to 94 (IKLKKKRKRS) are compositionally biased toward basic residues. S96 and S97 each carry phosphoserine. Over residues 106–141 (QKKQKYQKKEKKKEKKNKSKKGKHHKKEKKKRKKEK) the composition is skewed to basic residues.

In terms of assembly, interacts with SREK1/SFRS12.

In terms of biological role, possible splicing regulator involved in the control of cellular survival. This chain is Protein SREK1IP1 (Srek1ip1), found in Rattus norvegicus (Rat).